The sequence spans 395 residues: MGIKHLYQVIAENAPDAIKAGDIKNHFGRKVAIDASMSIYSFLIAVRSEGQQLMSDTGETTSHLMGMFYRTLRMVDNGIKPLYVFDGAPPKLKSGELAKRTARKAEATEAHEEAKETGTAEDVEKFSRRTVRVTRDHNAECKKLLKLMGIPYIDAPTEAEAQCAVLARAGKVYAAASEDMDTLCFEAPILLRHLTFSEQRKEPILEIHLSRALEGLDMDRKQFIDLCILLGCDYLEPIPKVGPNTALKLIREFGSLEKVVEHMESDPKKKYVIPEDWPYQDARELFLNPDVREASHPDCDFKWEAPDIEGLVEFLVKDKGFNEDRVRNGAARLQKNLKTAQQSRLEGFFKPVARTDEEKANLKRKHDEKLQEQKKRKKEEAKAKKEAKARPRGAG.

The N-domain stretch occupies residues methionine 1–lysine 104. Position 34 (aspartate 34) interacts with Mg(2+). DNA-binding residues include arginine 47 and arginine 70. Aspartate 86 is a Mg(2+) binding site. The tract at residues alanine 102–glutamate 121 is disordered. The I-domain stretch occupies residues aspartate 122–phenylalanine 253. Mg(2+) contacts are provided by glutamate 158, glutamate 160, aspartate 179, and aspartate 181. Glutamate 158 lines the DNA pocket. DNA contacts are provided by glycine 231 and aspartate 233. A Mg(2+)-binding site is contributed by aspartate 233. Positions glutamine 341–phenylalanine 349 are interaction with PCNA. Residues phenylalanine 348–glycine 395 are disordered. Residues alanine 353–alanine 389 are compositionally biased toward basic and acidic residues.

Belongs to the XPG/RAD2 endonuclease family. FEN1 subfamily. As to quaternary structure, interacts with PCNA. Three molecules of fen1 bind to one PCNA trimer with each molecule binding to one PCNA monomer. PCNA stimulates the nuclease activity without altering cleavage specificity. The cofactor is Mg(2+). In terms of processing, phosphorylated. Phosphorylation upon DNA damage induces relocalization to the nuclear plasma.

Its subcellular location is the nucleus. It is found in the nucleolus. The protein localises to the nucleoplasm. It localises to the mitochondrion. Structure-specific nuclease with 5'-flap endonuclease and 5'-3' exonuclease activities involved in DNA replication and repair. During DNA replication, cleaves the 5'-overhanging flap structure that is generated by displacement synthesis when DNA polymerase encounters the 5'-end of a downstream Okazaki fragment. It enters the flap from the 5'-end and then tracks to cleave the flap base, leaving a nick for ligation. Also involved in the long patch base excision repair (LP-BER) pathway, by cleaving within the apurinic/apyrimidinic (AP) site-terminated flap. Acts as a genome stabilization factor that prevents flaps from equilibrating into structures that lead to duplications and deletions. Also possesses 5'-3' exonuclease activity on nicked or gapped double-stranded DNA, and exhibits RNase H activity. Also involved in replication and repair of rDNA and in repairing mitochondrial DNA. In Aspergillus flavus (strain ATCC 200026 / FGSC A1120 / IAM 13836 / NRRL 3357 / JCM 12722 / SRRC 167), this protein is Flap endonuclease 1 (fen1).